Reading from the N-terminus, the 156-residue chain is Putative type II restriction enzyme ApeKORF2002P (156 aa).

To M.jannaschii MJ1199.

It catalyses the reaction Endonucleolytic cleavage of DNA to give specific double-stranded fragments with terminal 5'-phosphates.. In terms of biological role, a putative type II restriction enzyme, its methylase would be APE_2002. The chain is Putative type II restriction enzyme ApeKORF2002P from Aeropyrum pernix (strain ATCC 700893 / DSM 11879 / JCM 9820 / NBRC 100138 / K1).